The primary structure comprises 474 residues: Rhodanese-like domain-containing protein 7 (474 aa).

2 disordered regions span residues 20-68 (SSPP…SSLK) and 179-198 (VSPEQEAIHHGHSSSSPLAA). A compositionally biased stretch (low complexity) spans 53–68 (QSQPHKLSSSPSSSLK). The Rhodanese domain occupies 245 to 368 (SDPETVVIDV…YLEEVPKTES (124 aa)). Catalysis depends on C328, which acts as the Cysteine persulfide intermediate. A disordered region spans residues 432 to 474 (RARARQTQFEEWGVIGGPDKGRRPATKPDSPRKKINAKLGSSI).

This is Rhodanese-like domain-containing protein 7 (STR7) from Arabidopsis thaliana (Mouse-ear cress).